The chain runs to 441 residues: ATP-dependent protease ATPase subunit HslU (441 aa).

ATP contacts are provided by residues Ile18, 60–65, Asp254, Glu319, and Arg391; that span reads GVGKTE.

This sequence belongs to the ClpX chaperone family. HslU subfamily. As to quaternary structure, a double ring-shaped homohexamer of HslV is capped on each side by a ring-shaped HslU homohexamer. The assembly of the HslU/HslV complex is dependent on binding of ATP.

It is found in the cytoplasm. Functionally, ATPase subunit of a proteasome-like degradation complex; this subunit has chaperone activity. The binding of ATP and its subsequent hydrolysis by HslU are essential for unfolding of protein substrates subsequently hydrolyzed by HslV. HslU recognizes the N-terminal part of its protein substrates and unfolds these before they are guided to HslV for hydrolysis. This Shewanella halifaxensis (strain HAW-EB4) protein is ATP-dependent protease ATPase subunit HslU.